The chain runs to 263 residues: Gap junction beta-6 protein (263 aa).

Residues Met1 to Ser19 lie on the Cytoplasmic side of the membrane. Residues Ile20–Ala40 traverse the membrane as a helical segment. Over Glu41–Arg75 the chain is Extracellular. The chain crosses the membrane as a helical span at residues Leu76–Ala96. The Cytoplasmic portion of the chain corresponds to Tyr97–Thr137. The chain crosses the membrane as a helical span at residues Cys138 to Tyr158. Residues Asp159–Thr189 are Extracellular-facing. Residues Val190–Leu210 traverse the membrane as a helical segment. The Cytoplasmic segment spans residues Cys211–Ser263.

Belongs to the connexin family. Beta-type (group I) subfamily. As to quaternary structure, a connexon is composed of a hexamer of connexins. As to expression, exclusively expressed in the cochlea of the inner ear, where it is found in cells of the tegmentum vasculosum, cuboidal cells, supporting cells and clear cells.

It is found in the cell membrane. The protein resides in the cell junction. It localises to the gap junction. In terms of biological role, one gap junction consists of a cluster of closely packed pairs of transmembrane channels, the connexons, through which materials of low MW diffuse from one cell to a neighboring cell. The chain is Gap junction beta-6 protein (GJB6) from Gallus gallus (Chicken).